The sequence spans 303 residues: 1D-myo-inositol 2-acetamido-2-deoxy-alpha-D-glucopyranoside deacetylase 1 (303 aa).

Residues His-15, Asp-18, and His-157 each coordinate Zn(2+).

It belongs to the MshB deacetylase family. The cofactor is Zn(2+).

The enzyme catalyses 1D-myo-inositol 2-acetamido-2-deoxy-alpha-D-glucopyranoside + H2O = 1D-myo-inositol 2-amino-2-deoxy-alpha-D-glucopyranoside + acetate. In terms of biological role, catalyzes the deacetylation of 1D-myo-inositol 2-acetamido-2-deoxy-alpha-D-glucopyranoside (GlcNAc-Ins) in the mycothiol biosynthesis pathway. This Saccharopolyspora erythraea (strain ATCC 11635 / DSM 40517 / JCM 4748 / NBRC 13426 / NCIMB 8594 / NRRL 2338) protein is 1D-myo-inositol 2-acetamido-2-deoxy-alpha-D-glucopyranoside deacetylase 1.